Consider the following 359-residue polypeptide: MSKVCIIGTTTWGITLGTIIAHKGREVMLWARTEDEAVLLSTQRRPADFLPENYHFPEFMNVTASLEEAIAGADMVLLAVPSQRMRPNIRLVAPLLTKSMLICSAAKGLEIGTAKRMSQVITDEISPDFAKNICVLSGPNLAMEILKGLPAVTVLAADTEKTAKKAAKLITAANFSAYTNTDIIGVELGGSLKNIIALGAGIVDGLNLGNNAKSALITRGLTEISALGAALGANPLTLSGLAGLGDLIATCSSNLSRNHFVGVELTKGRSLNDIMYNMSNVAEGVSTTAVAYEMARSMDLEMPVTENIYNVLYNNADPKEAARILMDAQATHELAGRKWNLFKMFRKRKARKTPELNPD.

Residues Thr11, Trp12, Arg32, and Lys107 each contribute to the NADPH site. 2 residues coordinate sn-glycerol 3-phosphate: Lys107 and Gly138. Position 142 (Ala142) interacts with NADPH. Residues Lys193, Asp246, Ser256, Arg257, and Asn258 each coordinate sn-glycerol 3-phosphate. Lys193 acts as the Proton acceptor in catalysis. Residue Arg257 coordinates NADPH. NADPH-binding residues include Val281 and Glu283.

Belongs to the NAD-dependent glycerol-3-phosphate dehydrogenase family.

It localises to the cytoplasm. The catalysed reaction is sn-glycerol 3-phosphate + NAD(+) = dihydroxyacetone phosphate + NADH + H(+). It catalyses the reaction sn-glycerol 3-phosphate + NADP(+) = dihydroxyacetone phosphate + NADPH + H(+). Its pathway is membrane lipid metabolism; glycerophospholipid metabolism. Functionally, catalyzes the reduction of the glycolytic intermediate dihydroxyacetone phosphate (DHAP) to sn-glycerol 3-phosphate (G3P), the key precursor for phospholipid synthesis. This is Glycerol-3-phosphate dehydrogenase [NAD(P)+] from Dehalococcoides mccartyi (strain ATCC BAA-2100 / JCM 16839 / KCTC 5957 / BAV1).